The primary structure comprises 155 residues: 6,7-dimethyl-8-ribityllumazine synthase (155 aa).

5-amino-6-(D-ribitylamino)uracil is bound by residues Phe24, 58 to 60 (AFE), and 82 to 84 (VII). A (2S)-2-hydroxy-3-oxobutyl phosphate-binding site is contributed by 87–88 (ST). His90 acts as the Proton donor in catalysis. Phe115 lines the 5-amino-6-(D-ribitylamino)uracil pocket. A (2S)-2-hydroxy-3-oxobutyl phosphate-binding site is contributed by Arg129.

Belongs to the DMRL synthase family.

The enzyme catalyses (2S)-2-hydroxy-3-oxobutyl phosphate + 5-amino-6-(D-ribitylamino)uracil = 6,7-dimethyl-8-(1-D-ribityl)lumazine + phosphate + 2 H2O + H(+). It participates in cofactor biosynthesis; riboflavin biosynthesis; riboflavin from 2-hydroxy-3-oxobutyl phosphate and 5-amino-6-(D-ribitylamino)uracil: step 1/2. Its function is as follows. Catalyzes the formation of 6,7-dimethyl-8-ribityllumazine by condensation of 5-amino-6-(D-ribitylamino)uracil with 3,4-dihydroxy-2-butanone 4-phosphate. This is the penultimate step in the biosynthesis of riboflavin. This Chlorobium chlorochromatii (strain CaD3) protein is 6,7-dimethyl-8-ribityllumazine synthase.